Consider the following 57-residue polypeptide: PDPCCNDKCDCKEGECKTGCKCTSCRCPPCEQCSSGCKCANKEDCRKTCSKPCSCCP.

The segment at 1–28 (PDPCCNDKCDCKEGECKTGCKCTSCRCP) is beta. 18 residues coordinate a divalent metal cation: C4, C5, C9, C11, C16, C20, C22, C25, C27, C30, C33, C37, C39, C45, C49, C53, C55, and C56. The alpha stretch occupies residues 29–57 (PCEQCSSGCKCANKEDCRKTCSKPCSCCP).

The protein belongs to the metallothionein superfamily. Type 3 family.

Its function is as follows. Metallothioneins have a high content of cysteine residues that bind various heavy metals. Class I MTS in marine crustacea are involved in the sequestration of elevated levels of heavy-metal ions. In Scylla serrata (Mud crab), this protein is Metallothionein-2.